A 79-amino-acid polypeptide reads, in one-letter code: Acyl carrier protein (79 aa).

The 76-residue stretch at 2–77 (DNIEQRVKKI…QAIDYATAHV (76 aa)) folds into the Carrier domain. The residue at position 37 (serine 37) is an O-(pantetheine 4'-phosphoryl)serine.

It belongs to the acyl carrier protein (ACP) family. In terms of processing, 4'-phosphopantetheine is transferred from CoA to a specific serine of apo-ACP by AcpS. This modification is essential for activity because fatty acids are bound in thioester linkage to the sulfhydryl of the prosthetic group.

Its subcellular location is the cytoplasm. The protein operates within lipid metabolism; fatty acid biosynthesis. In terms of biological role, carrier of the growing fatty acid chain in fatty acid biosynthesis. The sequence is that of Acyl carrier protein from Cupriavidus pinatubonensis (strain JMP 134 / LMG 1197) (Cupriavidus necator (strain JMP 134)).